The chain runs to 615 residues: Nuclear cap-binding protein subunit 3 (615 aa).

Lys12 is covalently cross-linked (Glycyl lysine isopeptide (Lys-Gly) (interchain with G-Cter in SUMO2)). The span at 15 to 27 (APAGPALGLPSPE) shows a compositional bias: low complexity. The interval 15–43 (APAGPALGLPSPEVESGLERGEPEPMEVE) is disordered. The residue at position 25 (Ser25) is a Phosphoserine. Lys70 participates in a covalent cross-link: Glycyl lysine isopeptide (Lys-Gly) (interchain with G-Cter in SUMO2). Ser73 carries the phosphoserine modification. The RNA recognition motif (RRM) domain stretch occupies residues 126-187 (ETIYICGVDE…MSSLPAQDKM (62 aa)). The short motif at 155 to 158 (WLDD) is the WLDD motif; essential for 7-methylguanosine-containing mRNA cap binding element. 2 disordered regions span residues 182–233 (PAQD…LDTL) and 332–400 (HSGL…MDYD). The segment covering 185-208 (DKMRSRDASEDKSSEKNKKDKQED) has biased composition (basic and acidic residues). Lys186 is covalently cross-linked (Glycyl lysine isopeptide (Lys-Gly) (interchain with G-Cter in SUMO2)). Residues Ser209 and Ser210 each carry the phosphoserine modification. Acidic residues-rich tracts occupy residues 209–230 (SSDD…DVEL) and 341–360 (EPIE…DMDA). Residues 361–383 (DDRVVVEYHEELPGLKQPRERSL) show a composition bias toward basic and acidic residues. Thr408 is subject to Phosphothreonine. Phosphoserine is present on Ser410. 2 disordered regions span residues 430–454 (SIRN…NKLP) and 467–615 (EKRQ…EAES). Positions 506–516 (VRREPSSDVHS) are enriched in basic and acidic residues. Lys536 is covalently cross-linked (Glycyl lysine isopeptide (Lys-Gly) (interchain with G-Cter in SUMO2)). Basic and acidic residues-rich tracts occupy residues 549-564 (KTKE…RASG) and 580-593 (IKEK…KSRL). Residue Ser563 is modified to Phosphoserine. Residues 606-615 (ESSSGSEAES) show a composition bias toward low complexity. Ser615 is modified (phosphoserine).

The protein belongs to the NCBP3 family. As to quaternary structure, component of an alternative cap-binding complex (CBC) composed of NCBP1/CBP80 and NCBP3. Interacts with SRRT, KPNA3, THOC5 and EIF4A3.

The protein resides in the nucleus. It is found in the cytoplasm. In terms of biological role, associates with NCBP1/CBP80 to form an alternative cap-binding complex (CBC) which plays a key role in mRNA export. NCBP3 serves as adapter protein linking the capped RNAs (m7GpppG-capped RNA) to NCBP1/CBP80. Unlike the conventional CBC with NCBP2 which binds both small nuclear RNA (snRNA) and messenger (mRNA) and is involved in their export from the nucleus, the alternative CBC with NCBP3 does not bind snRNA and associates only with mRNA thereby playing a role in only mRNA export. The alternative CBC is particularly important in cellular stress situations such as virus infections and the NCBP3 activity is critical to inhibit virus growth. The polypeptide is Nuclear cap-binding protein subunit 3 (Mus musculus (Mouse)).